The chain runs to 540 residues: Phenylalanine--tRNA ligase beta subunit (540 aa).

A B5 domain is found at 268–342 (LRHTSVPFSL…MAYGYDRFTL (75 aa)). Mg(2+)-binding residues include D320, D326, E329, and D330.

The protein belongs to the phenylalanyl-tRNA synthetase beta subunit family. Type 2 subfamily. Tetramer of two alpha and two beta subunits. The cofactor is Mg(2+).

It is found in the cytoplasm. The enzyme catalyses tRNA(Phe) + L-phenylalanine + ATP = L-phenylalanyl-tRNA(Phe) + AMP + diphosphate + H(+). This chain is Phenylalanine--tRNA ligase beta subunit, found in Metallosphaera sedula (strain ATCC 51363 / DSM 5348 / JCM 9185 / NBRC 15509 / TH2).